The following is a 500-amino-acid chain: Cytochrome P450 11B3, mitochondrial (500 aa).

The N-terminal 24 residues, 1 to 24, are a transit peptide targeting the mitochondrion; the sequence is MALRVTADVWLARPWQCLHRTRAL. Cysteine 447 is a binding site for heme.

It belongs to the cytochrome P450 family. Heme serves as cofactor. Expressed in the adrenal cortex and in different brain tissues, including hippocampus, hypothalamus, cerebellum, cerebral cortex, and midbrain.

Its subcellular location is the mitochondrion membrane. It catalyses the reaction a steroid + 2 reduced [adrenodoxin] + O2 + 2 H(+) = an 11beta-hydroxysteroid + 2 oxidized [adrenodoxin] + H2O. It carries out the reaction 21-hydroxyprogesterone + 2 reduced [adrenodoxin] + O2 + 2 H(+) = corticosterone + 2 oxidized [adrenodoxin] + H2O. The enzyme catalyses 21-hydroxyprogesterone + 2 reduced [adrenodoxin] + O2 + 2 H(+) = 18-hydroxy-11-deoxycorticosterone + 2 oxidized [adrenodoxin] + H2O. The catalysed reaction is 21-hydroxyprogesterone + 2 reduced [adrenodoxin] + O2 + 2 H(+) = 19-hydroxy-11-deoxycorticosterone + 2 oxidized [adrenodoxin] + H2O. Functionally, a cytochrome P450 monooxygenase involved in the biosynthesis of adrenal corticoids. Catalyzes the hydroxylation of steroids at 11beta, 18- or 19-positions, with preferred regioselectivity at 11beta and 18. Converts 11-deoxycorticosterone into corticosterone, 18-hydroxy-11-deoxycorticosterone, and/or 19-hydroxy-11-deoxycorticosterone, but not to 18-hydroxycorticosterone or aldosterone. Mechanistically, uses molecular oxygen inserting one oxygen atom into a substrate for hydroxylation and reducing the second into a water molecule. Two electrons are provided by NADPH via a two-protein mitochondrial transfer system comprising flavoprotein FDXR (adrenodoxin/ferredoxin reductase) and nonheme iron-sulfur protein FDX1 or FDX2 (adrenodoxin/ferredoxin). This Rattus norvegicus (Rat) protein is Cytochrome P450 11B3, mitochondrial (Cyp11b3).